The chain runs to 255 residues: MLTKRIIPCLDVKDGRVVKGVQFLELRDAGDPVEAAEAYDAQGADELTFLDITASSDKRNIILDVVSRTAERVFMPLTVGGGIRTIEDIRNLLNAGADKVSINTEAVNNPEFVKEAAERFGSQCIVVAIDARRVADSDPQRWEVYIHGGRTPTGIDAMEWAMRMEAYGAGEILLTSMDKDGTKDGYDIPLTRTISDLVSIPVIASGGVGNLEHIHQGLTEGGASAALAASIFHFREYTIHECKEYLQKRGVPARL.

Active-site residues include D11 and D130.

Belongs to the HisA/HisF family. As to quaternary structure, heterodimer of HisH and HisF.

The protein resides in the cytoplasm. The enzyme catalyses 5-[(5-phospho-1-deoxy-D-ribulos-1-ylimino)methylamino]-1-(5-phospho-beta-D-ribosyl)imidazole-4-carboxamide + L-glutamine = D-erythro-1-(imidazol-4-yl)glycerol 3-phosphate + 5-amino-1-(5-phospho-beta-D-ribosyl)imidazole-4-carboxamide + L-glutamate + H(+). It participates in amino-acid biosynthesis; L-histidine biosynthesis; L-histidine from 5-phospho-alpha-D-ribose 1-diphosphate: step 5/9. Functionally, IGPS catalyzes the conversion of PRFAR and glutamine to IGP, AICAR and glutamate. The HisF subunit catalyzes the cyclization activity that produces IGP and AICAR from PRFAR using the ammonia provided by the HisH subunit. The protein is Imidazole glycerol phosphate synthase subunit HisF of Syntrophotalea carbinolica (strain DSM 2380 / NBRC 103641 / GraBd1) (Pelobacter carbinolicus).